Consider the following 314-residue polypeptide: Malate dehydrogenase (314 aa).

NAD(+) is bound by residues 13–18 (GGGQIG) and D37. R88 and R94 together coordinate substrate. Residues N101 and 124-126 (VAN) each bind NAD(+). Substrate contacts are provided by N126 and R157. The active-site Proton acceptor is the H181.

It belongs to the LDH/MDH superfamily. MDH type 3 family.

It carries out the reaction (S)-malate + NAD(+) = oxaloacetate + NADH + H(+). Catalyzes the reversible oxidation of malate to oxaloacetate. In Myxococcus xanthus, this protein is Malate dehydrogenase.